The primary structure comprises 76 residues: Large ribosomal subunit protein eL20 (76 aa).

It belongs to the eukaryotic ribosomal protein eL20 family. As to quaternary structure, part of the 50S ribosomal subunit. Binds 23S rRNA.

This is Large ribosomal subunit protein eL20 from Methanococcus maripaludis (strain DSM 14266 / JCM 13030 / NBRC 101832 / S2 / LL).